Consider the following 1038-residue polypeptide: MERIVSRVRRLSPLHTFSDALLISLLSESDFQPDSIQQGVVLFEKDEPTEYWYLLLSGEVQLYSKTYTGDFNHLKTLRCGALFGDLSTLTHSCSCLVTRPAQLIRIAQNHFLSVYNKHGDHLQPFIIIMHDILTDETPSDPIHPHSSGLFNGQRSMDLISTEINPSEIVSVSTNGMLSKMILPSIPNQREKPMNRVVVNQQKNEERNFIEFHNPTGIEKQIRDSGGILHRKMLTDNHQVIRDITTEHTRVQNCMIGAEMIDWLLTLFVSTSTTCSSLSRIQMSAIWQVLLNNGLISHIDGEHQFLDKTNSYYRWVQQFRSRNKVAPSIEEVSKSITLLSSVAPETLFLMIVSKPGFERSPEELEVVYEELTFIKALSHLSTMVKRQLSNFVKVEQYVHAGSVVFRQGEIGVYWYIVLKGAVEVNVNGKIVCLLREGDDFGKLALVNDLPRAATIVTYEDDSMFLVVDKHHFNQILHQVEANTVRLKDYGEDVLVLEKVDIPRGAALENSNSCNFNCGYSVMAGKAEKILEYVLETRIDALGDDISELDVFVEDFILTHDAFMPDNTVCNFLKSYYFRTPYRATRDSITDSCTEEVRCKRRVVQFVYVWCSLLRVNFFLNPVTNSFVEELFCHVIDDRKRLGGMEDILTRIGSIRSTRENMQLVLARHPAIVLDCGVLSAHTPCPVLPSDVCNQIIYLADTTCFVLPIRVDKTAEEICELSRRRMSFSAEPLNLVEVKSNGEKLIFSPNDRAIPTVLSLNSKLYVVNREEIPLLVPMEDQNGPTPSSHSSILHLIDSQELAHQLFLFHLQLLRSTDSNELLYQVIGRESFPLSMPFNLDLLVRRFNEVQHWSTTEILLATEENRMEILKKFISIATIAREYRDLLTVFAITLGLSHTSISRLTLTWSKLPPASLKTFSELENLLDPTRNHRMYRLLVSKMSSPYIPFVPLILKDLMFIHQGNKSFYNGLVNFEKMHMFAKIFRSFRQCKSQMDNGAEHEFIEPQSLIRNLRVIDNQKKLMQLSYEIEPKSAPKRNVIFH.

An a nucleoside 3',5'-cyclic phosphate-binding site is contributed by 10–140 (RLSPLHTFSD…DILTDETPSD (131 aa)). Positions 234 to 316 (TDNHQVIRDI…KTNSYYRWVQ (83 aa)) constitute a DEP domain. 375–492 (ALSHLSTMVK…VRLKDYGEDV (118 aa)) lines the a nucleoside 3',5'-cyclic phosphate pocket. Residues 516–654 (CGYSVMAGKA…DILTRIGSIR (139 aa)) form the N-terminal Ras-GEF domain. A Ras-GEF domain is found at 795-1028 (DSQELAHQLF…MQLSYEIEPK (234 aa)).

Interacts (via C-terminus) with drn-1. As to expression, expressed specifically in neurons including the nerve ring, ventral and dorsal nerve cord motor neurons and tail ganglia.

Its function is as follows. Guanine nucleotide-releasing protein. Together with GTPase drn-1, may regulate acetylcholine release at the neuromuscular junctions probably downstream of G-protein gsa-1 and adenylate cyclase acy-1. The chain is Rap guanine nucleotide exchange factor 1 (epac-1) from Caenorhabditis elegans.